The chain runs to 568 residues: Urease subunit alpha (568 aa).

In terms of domain architecture, Urease spans Gly130–Phe568. The Ni(2+) site is built by His135, His137, and Lys218. Position 218 is an N6-carboxylysine (Lys218). Substrate is bound at residue His220. The Ni(2+) site is built by His247 and His273. Catalysis depends on His321, which acts as the Proton donor. Residue Asp361 coordinates Ni(2+).

This sequence belongs to the metallo-dependent hydrolases superfamily. Urease alpha subunit family. Heterotrimer of UreA (gamma), UreB (beta) and UreC (alpha) subunits. Three heterotrimers associate to form the active enzyme. It depends on Ni cation as a cofactor. In terms of processing, carboxylation allows a single lysine to coordinate two nickel ions.

Its subcellular location is the cytoplasm. The catalysed reaction is urea + 2 H2O + H(+) = hydrogencarbonate + 2 NH4(+). It functions in the pathway nitrogen metabolism; urea degradation; CO(2) and NH(3) from urea (urease route): step 1/1. The polypeptide is Urease subunit alpha (Burkholderia pseudomallei (strain 668)).